Here is a 106-residue protein sequence, read N- to C-terminus: Large ribosomal subunit protein bL21 (106 aa).

The protein belongs to the bacterial ribosomal protein bL21 family. In terms of assembly, part of the 50S ribosomal subunit. Contacts protein L20.

This protein binds to 23S rRNA in the presence of protein L20. This Chlamydia abortus (strain DSM 27085 / S26/3) (Chlamydophila abortus) protein is Large ribosomal subunit protein bL21.